Reading from the N-terminus, the 203-residue chain is Small ribosomal subunit protein uS5 (203 aa).

Positions 1–18 (MENNVKKETIVDSEKVEK) are enriched in basic and acidic residues. Residues 1–36 (MENNVKKETIVDSEKVEKQQPVTAPVVNKKENTQPK) form a disordered region. An S5 DRBM domain is found at 49–112 (FEERVVKIKR…KNANNNLIKV (64 aa)).

This sequence belongs to the universal ribosomal protein uS5 family. Part of the 30S ribosomal subunit. Contacts proteins S4 and S8.

Its function is as follows. With S4 and S12 plays an important role in translational accuracy. Functionally, located at the back of the 30S subunit body where it stabilizes the conformation of the head with respect to the body. In Ureaplasma urealyticum serovar 10 (strain ATCC 33699 / Western), this protein is Small ribosomal subunit protein uS5.